The following is a 395-amino-acid chain: MQDEAMRRSGANSPAGDSLADRWRAARPPVAGLHLDSAACSRQSFAALDAAAQHARHEAEVGGYVAAEAAAAVLDAGRAAVAALSGLPDAEVVFTTGSLHALDLLLGSWPGENRTLACLPGEYGPNLAVMAAHGFDVRPLPTLQDGRVALDDAAFMLADDPPDLVHLTVVASHRGVAQPLAMVAQLCTELKLPLVVDAAQGLGHVDCAVGADVTYASSRKWIAGPRGVGVLAVRPELMERLRARLPAPDWMPPLTVAQQLGFGEANVAARVGFSVALGEHLACGPQAIRARLAELGDIARTVLADVSGWRVVEAVDEPSAITTLAPIDGADPAAVRAWLLSQRRIVTTYAGVERAPLELPAPVLRISPHVDNTADDLDAFAEALVAATAATSGER.

Residues 1 to 21 form a disordered region; that stretch reads MQDEAMRRSGANSPAGDSLAD. An N6-(pyridoxal phosphate)lysine modification is found at lysine 220.

The protein belongs to the class-V pyridoxal-phosphate-dependent aminotransferase family. EgtE subfamily. Pyridoxal 5'-phosphate is required as a cofactor.

The enzyme catalyses S-(hercyn-2-yl)-L-cysteine S-oxide + AH2 + H(+) = ergothioneine + pyruvate + A + NH4(+). It participates in amino-acid biosynthesis; ergothioneine biosynthesis. In terms of biological role, probably catalyzes the conversion of hercynylcysteine sulfoxide to ergothioneine. ERG is one of the major redox buffers which protects bacteria against redox stressors and antibiotics; loss of ERG or mycothiol (MSH, the other major redox buffer in this bacteria) leads to respiratory alterations and bioenergetic deficiencies that negatively impact virulence. This Mycobacterium tuberculosis (strain CDC 1551 / Oshkosh) protein is Probable hercynylcysteine sulfoxide lyase.